Here is a 381-residue protein sequence, read N- to C-terminus: tRNA pseudouridine synthase D (381 aa).

The active-site Nucleophile is Asp81. Positions 160–335 (GMPNYFGSQR…TLGSRRFFWV (176 aa)) constitute a TRUD domain.

This sequence belongs to the pseudouridine synthase TruD family.

The enzyme catalyses uridine(13) in tRNA = pseudouridine(13) in tRNA. Responsible for synthesis of pseudouridine from uracil-13 in transfer RNAs. The protein is tRNA pseudouridine synthase D of Helicobacter pylori (strain ATCC 700392 / 26695) (Campylobacter pylori).